The following is a 371-amino-acid chain: 4-hydroxy-3-methylbut-2-en-1-yl diphosphate synthase (flavodoxin) (371 aa).

Residues Cys270, Cys273, Cys305, and Glu312 each contribute to the [4Fe-4S] cluster site.

The protein belongs to the IspG family. [4Fe-4S] cluster serves as cofactor.

The catalysed reaction is (2E)-4-hydroxy-3-methylbut-2-enyl diphosphate + oxidized [flavodoxin] + H2O + 2 H(+) = 2-C-methyl-D-erythritol 2,4-cyclic diphosphate + reduced [flavodoxin]. It participates in isoprenoid biosynthesis; isopentenyl diphosphate biosynthesis via DXP pathway; isopentenyl diphosphate from 1-deoxy-D-xylulose 5-phosphate: step 5/6. Converts 2C-methyl-D-erythritol 2,4-cyclodiphosphate (ME-2,4cPP) into 1-hydroxy-2-methyl-2-(E)-butenyl 4-diphosphate. The protein is 4-hydroxy-3-methylbut-2-en-1-yl diphosphate synthase (flavodoxin) of Shewanella pealeana (strain ATCC 700345 / ANG-SQ1).